Reading from the N-terminus, the 597-residue chain is Cytosolic Fe-S cluster assembly factor nar1 (597 aa).

[4Fe-4S] cluster is bound by residues C20, C62, C65, C68, C216, and C271. Residues 428-449 (RASRLPGGNRRLPVGRGAASGS) are disordered. Residues C462 and C466 each coordinate [4Fe-4S] cluster. A disordered region spans residues 479-505 (REASSSVQSSTSAEVPDSSSKPTPHEQ).

This sequence belongs to the NARF family.

Functionally, component of the cytosolic Fe/S protein assembly machinery. Required for maturation of extramitochondrial Fe/S proteins. May play a role in the transfer of pre-assembled Fe/S clusters to target apoproteins. This is Cytosolic Fe-S cluster assembly factor nar1 (nar1) from Aspergillus niger (strain ATCC MYA-4892 / CBS 513.88 / FGSC A1513).